The chain runs to 335 residues: Ferrochelatase (335 aa).

Fe cation contacts are provided by histidine 211 and glutamate 290.

This sequence belongs to the ferrochelatase family.

Its subcellular location is the cytoplasm. It catalyses the reaction heme b + 2 H(+) = protoporphyrin IX + Fe(2+). It participates in porphyrin-containing compound metabolism; protoheme biosynthesis; protoheme from protoporphyrin-IX: step 1/1. Catalyzes the ferrous insertion into protoporphyrin IX. The polypeptide is Ferrochelatase (Sulfurihydrogenibium sp. (strain YO3AOP1)).